The sequence spans 203 residues: UPF0637 protein EF_3078 (203 aa).

It belongs to the UPF0637 family.

This Enterococcus faecalis (strain ATCC 700802 / V583) protein is UPF0637 protein EF_3078.